Consider the following 259-residue polypeptide: Small ribosomal subunit protein uS2 (259 aa).

This sequence belongs to the universal ribosomal protein uS2 family.

This Streptococcus pneumoniae (strain 70585) protein is Small ribosomal subunit protein uS2.